The chain runs to 96 residues: Prokineticin Bo8 (96 aa).

A signal peptide spans 1-19; the sequence is MKCFAQIVVLLLVIAFSHG. Cystine bridges form between C26–C38, C32–C50, C37–C78, C60–C86, and C80–C95.

As to expression, expressed by the skin glands.

It localises to the secreted. Functionally, potent agonist for both PKR1/PROKR1 and PKR2/PROKR2, and inducer of a potent and long-lasting hyperalgesia. Also potentiates capsaicin-induced TRPV1 current, when tested on DRG neurons. At subnanomolar concentrations, this protein both induces potent chemotaxis of macrophages and stimulates LPS-induced production of the pro-inflammatory cytokines IL-1 and IL-12. In vivo, potently stimulates the contraction of the guinea-pig gastrointestinal (GI) smooth muscle (nanomolar concentration). The protein is Prokineticin Bo8 of Bombina orientalis (Oriental fire-bellied toad).